We begin with the raw amino-acid sequence, 243 residues long: MSETHFGFEKVDEAEKADKVAGVFHSVASKYDVMNDLMSGGMHRLWKMFTIAQAGVRPGHKVLDIAGGTGDLAKAFAKQAGPTGEVWLTDINESMLRVGRDRLLNKGIVTPVCLCDAERIPFPDNHFDLVTVAFGLRNMTHKDAALAEMRRVVKPGGKVMVLEFSKVWKPLEKAYDVYSFKVLPWLGERVAGDAPSYRYLAESIRMHPDQASLVRLMEHAGLENVEYFNLTAGVVALHVGRKY.

S-adenosyl-L-methionine-binding positions include threonine 69, aspartate 90, and 116–117 (DA).

The protein belongs to the class I-like SAM-binding methyltransferase superfamily. MenG/UbiE family.

The enzyme catalyses a 2-demethylmenaquinol + S-adenosyl-L-methionine = a menaquinol + S-adenosyl-L-homocysteine + H(+). It catalyses the reaction a 2-methoxy-6-(all-trans-polyprenyl)benzene-1,4-diol + S-adenosyl-L-methionine = a 5-methoxy-2-methyl-3-(all-trans-polyprenyl)benzene-1,4-diol + S-adenosyl-L-homocysteine + H(+). Its pathway is quinol/quinone metabolism; menaquinone biosynthesis; menaquinol from 1,4-dihydroxy-2-naphthoate: step 2/2. It functions in the pathway cofactor biosynthesis; ubiquinone biosynthesis. In terms of biological role, methyltransferase required for the conversion of demethylmenaquinol (DMKH2) to menaquinol (MKH2) and the conversion of 2-polyprenyl-6-methoxy-1,4-benzoquinol (DDMQH2) to 2-polyprenyl-3-methyl-6-methoxy-1,4-benzoquinol (DMQH2). The protein is Ubiquinone/menaquinone biosynthesis C-methyltransferase UbiE of Cupriavidus necator (strain ATCC 17699 / DSM 428 / KCTC 22496 / NCIMB 10442 / H16 / Stanier 337) (Ralstonia eutropha).